A 315-amino-acid polypeptide reads, in one-letter code: Small ribosomal subunit biogenesis GTPase RsgA (315 aa).

The region spanning 79 to 243 (LSKESHILGA…LIDTPGIKGF (165 aa)) is the CP-type G domain. GTP-binding positions include 128–131 (NKID) and 182–190 (GHSGVGKSS). The Zn(2+) site is built by cysteine 267, cysteine 272, histidine 274, and cysteine 280.

Belongs to the TRAFAC class YlqF/YawG GTPase family. RsgA subfamily. Monomer. Associates with 30S ribosomal subunit, binds 16S rRNA. It depends on Zn(2+) as a cofactor.

It is found in the cytoplasm. In terms of biological role, one of several proteins that assist in the late maturation steps of the functional core of the 30S ribosomal subunit. Helps release RbfA from mature subunits. May play a role in the assembly of ribosomal proteins into the subunit. Circularly permuted GTPase that catalyzes slow GTP hydrolysis, GTPase activity is stimulated by the 30S ribosomal subunit. This is Small ribosomal subunit biogenesis GTPase RsgA from Porphyromonas gingivalis (strain ATCC BAA-308 / W83).